Consider the following 187-residue polypeptide: Transcriptional regulator VspR (187 aa).

Functionally, represses the transcription of several genes encoded within the Vibrio 7th pandemic island-1 (VSP-1), including dncV, VC_0176, VC_0178 and VC_0180. This Vibrio cholerae serotype O1 (strain ATCC 39315 / El Tor Inaba N16961) protein is Transcriptional regulator VspR (vspR).